The following is a 464-amino-acid chain: NADH dehydrogenase [ubiquinone] flavoprotein 1, mitochondrial (464 aa).

A mitochondrion-targeting transit peptide spans 1 to 20; the sequence is MLATRRLLGWSLPARVSVRF. Residue Lys81 is modified to N6-acetyllysine; alternate. At Lys81 the chain carries N6-succinyllysine; alternate. Position 87–96 (87–96) interacts with NADH; the sequence is GRGGAGFPTG. The residue at position 104 (Lys104) is an N6-acetyllysine. 199–247 is a binding site for FMN; the sequence is RGAGAYICGEETALIESIEGKQGKPRLKPPFPADVGVFGCPTTVANVET. The residue at position 257 (Arg257) is an Omega-N-methylarginine. Lys375 is subject to N6-acetyllysine. The [4Fe-4S] cluster site is built by Cys379, Cys382, Cys385, and Cys425.

This sequence belongs to the complex I 51 kDa subunit family. In terms of assembly, core subunit of respiratory chain NADH dehydrogenase (Complex I) which is composed of 45 different subunits. This is a component of the flavoprotein-sulfur (FP) fragment of the enzyme. Interacts with RAB5IF. FMN is required as a cofactor. Requires [4Fe-4S] cluster as cofactor.

Its subcellular location is the mitochondrion inner membrane. The enzyme catalyses a ubiquinone + NADH + 5 H(+)(in) = a ubiquinol + NAD(+) + 4 H(+)(out). Functionally, core subunit of the mitochondrial membrane respiratory chain NADH dehydrogenase (Complex I) which catalyzes electron transfer from NADH through the respiratory chain, using ubiquinone as an electron acceptor. Part of the peripheral arm of the enzyme, where the electrons from NADH are accepted by flavin mononucleotide (FMN) and then passed along a chain of iron-sulfur clusters by electron tunnelling to the final acceptor ubiquinone. Contains FMN, which is the initial electron acceptor as well as one iron-sulfur cluster. The polypeptide is NADH dehydrogenase [ubiquinone] flavoprotein 1, mitochondrial (Pan troglodytes (Chimpanzee)).